The sequence spans 388 residues: Flap endonuclease 1 (388 aa).

An N-domain region spans residues 1–105 (MGIKNLTSLI…GELAKRYARR (105 aa)). Asp-34 contributes to the Mg(2+) binding site. A DNA-binding site is contributed by Arg-71. Mg(2+) contacts are provided by Asp-87, Glu-159, Glu-161, Asp-180, and Asp-182. Positions 123-254 (DVQKFQKRTI…KKSFDMITKH (132 aa)) are I-domain. Glu-159 contacts DNA. Residues Gly-232 and Asp-234 each coordinate DNA. Mg(2+) is bound at residue Asp-234. An interaction with PCNA region spans residues 338–346 (VQTRIDTFF). Residues 349-388 (IKRPRDEDAGSAKKKQKTVAKPGAAGSKKKPAAKKAAGKK) are disordered. The span at 375–388 (SKKKPAAKKAAGKK) shows a compositional bias: basic residues.

It belongs to the XPG/RAD2 endonuclease family. FEN1 subfamily. In terms of assembly, interacts with PCNA. Three molecules of repG bind to one PCNA trimer with each molecule binding to one PCNA monomer. PCNA stimulates the nuclease activity without altering cleavage specificity. Requires Mg(2+) as cofactor. Post-translationally, phosphorylated. Phosphorylation upon DNA damage induces relocalization to the nuclear plasma.

Its subcellular location is the nucleus. The protein localises to the nucleolus. It is found in the nucleoplasm. The protein resides in the mitochondrion. Structure-specific nuclease with 5'-flap endonuclease and 5'-3' exonuclease activities involved in DNA replication and repair. During DNA replication, cleaves the 5'-overhanging flap structure that is generated by displacement synthesis when DNA polymerase encounters the 5'-end of a downstream Okazaki fragment. It enters the flap from the 5'-end and then tracks to cleave the flap base, leaving a nick for ligation. Also involved in the long patch base excision repair (LP-BER) pathway, by cleaving within the apurinic/apyrimidinic (AP) site-terminated flap. Acts as a genome stabilization factor that prevents flaps from equilibrating into structures that lead to duplications and deletions. Also possesses 5'-3' exonuclease activity on nicked or gapped double-stranded DNA, and exhibits RNase H activity. Also involved in replication and repair of rDNA and in repairing mitochondrial DNA. This is Flap endonuclease 1 from Heterostelium pallidum (strain ATCC 26659 / Pp 5 / PN500) (Cellular slime mold).